The chain runs to 176 residues: Transcription factor 21 (176 aa).

The tract at residues 1–84 (MSTGSISDVD…QVQRNAANAR (84 aa)) is disordered. Over residues 31 to 44 (GTSNESTEDSSNCE) the composition is skewed to polar residues. The bHLH domain maps to 76-128 (VQRNAANARERARMRVLSKAFSRLKTTLPWVPPDTKLSKLDTLRLASSYIAHL).

In terms of assembly, efficient DNA binding requires dimerization with another bHLH protein. In terms of tissue distribution, expressed in the cranial paraxial mesoderm from 20 hpf and subsequently becomes restricted to the pharyngeal mesoderm that will form the muscle. Expression in the proepicardial organ is first seen at 40hpf in a cluster of cells between the myocardium and yolk. Also expressed in the developing arches. Expression begins to surround the heart by day 3 of development, and by 96 hpf, expression is restricted to the outer epicardial layer surrounding the myocardium.

The protein localises to the nucleus. Its function is as follows. Involved in epithelial-mesenchymal interactions in kidney and lung morphogenesis that include epithelial differentiation and branching morphogenesis. This Danio rerio (Zebrafish) protein is Transcription factor 21.